Consider the following 115-residue polypeptide: Large ribosomal subunit protein bL20 (115 aa).

Belongs to the bacterial ribosomal protein bL20 family.

Binds directly to 23S ribosomal RNA and is necessary for the in vitro assembly process of the 50S ribosomal subunit. It is not involved in the protein synthesizing functions of that subunit. This is Large ribosomal subunit protein bL20 from Chlorobium phaeovibrioides (strain DSM 265 / 1930) (Prosthecochloris vibrioformis (strain DSM 265)).